A 580-amino-acid chain; its full sequence is 2-hydroxyacyl-CoA lyase 1 (580 aa).

Glu-47 is a binding site for thiamine diphosphate. Positions 413 to 494 (TMDIGRLCIP…FIVLNNNGVY (82 aa)) are thiamine pyrophosphate binding. Residues Asp-463 and Asn-490 each contribute to the Mg(2+) site.

Belongs to the TPP enzyme family. In terms of assembly, homotetramer. It depends on Mg(2+) as a cofactor. Requires thiamine diphosphate as cofactor.

It is found in the peroxisome. It carries out the reaction a 2-hydroxy-3-methyl fatty acyl-CoA = a 2-methyl-branched fatty aldehyde + formyl-CoA. It catalyses the reaction an (R)-2-hydroxy-long-chain-fatty acyl-CoA = a long-chain fatty aldehyde + formyl-CoA. The catalysed reaction is 2-hydroxy-3-methylhexadecanoyl-CoA = 2-methylpentadecanal + formyl-CoA. The enzyme catalyses 2-hydroxyoctadecanoyl-CoA = heptadecanal + formyl-CoA. Its function is as follows. Peroxisomal 2-OH acyl-CoA lyase involved in the cleavage (C1 removal) reaction in the fatty acid alpha-oxydation in a thiamine pyrophosphate (TPP)-dependent manner. Involved in the degradation of 3-methyl-branched fatty acids and the shortening of 2-hydroxy long-chain fatty acids. This Dictyostelium discoideum (Social amoeba) protein is 2-hydroxyacyl-CoA lyase 1 (hacl1).